The sequence spans 270 residues: 3-phenylpropionate-dihydrodiol/cinnamic acid-dihydrodiol dehydrogenase (270 aa).

Residue phenylalanine 10–alanine 34 coordinates NAD(+). Serine 143 contributes to the substrate binding site. The active-site Proton acceptor is tyrosine 156.

This sequence belongs to the short-chain dehydrogenases/reductases (SDR) family.

It carries out the reaction 3-(cis-5,6-dihydroxycyclohexa-1,3-dien-1-yl)propanoate + NAD(+) = 3-(2,3-dihydroxyphenyl)propanoate + NADH + H(+). The catalysed reaction is (2E)-3-(cis-5,6-dihydroxycyclohexa-1,3-dien-1-yl)prop-2-enoate + NAD(+) = (2E)-3-(2,3-dihydroxyphenyl)prop-2-enoate + NADH + H(+). It functions in the pathway aromatic compound metabolism; 3-phenylpropanoate degradation. Functionally, converts 3-phenylpropionate-dihydrodiol (PP-dihydrodiol) and cinnamic acid-dihydrodiol (CI-dihydrodiol) into 3-(2,3-dihydroxylphenyl)propanoic acid (DHPP) and 2,3-dihydroxicinnamic acid (DHCI), respectively. The chain is 3-phenylpropionate-dihydrodiol/cinnamic acid-dihydrodiol dehydrogenase from Escherichia coli O8 (strain IAI1).